Here is a 270-residue protein sequence, read N- to C-terminus: tRNA pseudouridine synthase A (270 aa).

Residue aspartate 60 is the Nucleophile of the active site. The tract at residues 107–111 is RNA binding; that stretch reads FHARF. Tyrosine 118 contributes to the substrate binding site. The segment at 168–172 is interaction with tRNA; sequence QCQSR.

This sequence belongs to the tRNA pseudouridine synthase TruA family. In terms of assembly, homodimer.

It carries out the reaction uridine(38/39/40) in tRNA = pseudouridine(38/39/40) in tRNA. Formation of pseudouridine at positions 38, 39 and 40 in the anticodon stem and loop of transfer RNAs. The chain is tRNA pseudouridine synthase A from Shigella boydii serotype 4 (strain Sb227).